A 38-amino-acid chain; its full sequence is Photosystem II reaction center protein Y (38 aa).

The chain crosses the membrane as a helical span at residues 5 to 23 (VVVVLAPVIIAGSWAIFNI).

This sequence belongs to the PsbY family. In terms of assembly, PSII is composed of 1 copy each of membrane proteins PsbA, PsbB, PsbC, PsbD, PsbE, PsbF, PsbH, PsbI, PsbJ, PsbK, PsbL, PsbM, PsbT, PsbX, PsbY, PsbZ, Psb30/Ycf12, peripheral proteins PsbO, CyanoQ (PsbQ), PsbU, PsbV and a large number of cofactors. It forms dimeric complexes.

Its subcellular location is the cellular thylakoid membrane. Its function is as follows. Loosely associated component of the core of photosystem II (PSII), it is not always seen in crystals. PSII is a light-driven water plastoquinone oxidoreductase, using light energy to abstract electrons from H(2)O, generating a proton gradient subsequently used for ATP formation. The protein is Photosystem II reaction center protein Y of Picosynechococcus sp. (strain ATCC 27264 / PCC 7002 / PR-6) (Agmenellum quadruplicatum).